A 427-amino-acid chain; its full sequence is Peptidase B (427 aa).

2 residues coordinate Mn(2+): lysine 195 and aspartate 200. Lysine 207 is an active-site residue. The Mn(2+) site is built by aspartate 218, aspartate 277, and glutamate 279. Arginine 281 is an active-site residue.

The protein belongs to the peptidase M17 family. Homohexamer. Mn(2+) is required as a cofactor.

It is found in the cytoplasm. It carries out the reaction Release of an N-terminal amino acid, Xaa, from a peptide or arylamide. Xaa is preferably Glu or Asp but may be other amino acids, including Leu, Met, His, Cys and Gln.. Its function is as follows. Probably plays an important role in intracellular peptide degradation. In Escherichia coli (strain UTI89 / UPEC), this protein is Peptidase B.